We begin with the raw amino-acid sequence, 139 residues long: MGETIRFGISIDDKLLESFDQLIEHKGYANRSEALRDLIRASLIDVKWENGEEEMVGTVTLVFNHHVRDLSDKLTEHQHAYHHQIISALHVHLDAHNCLEVLVVRGKAREIKKIADELIGVKGVKHGKLVMTATGHDLH.

The Ni(2+) site is built by histidine 79, histidine 90, histidine 92, and cysteine 98.

The protein belongs to the transcriptional regulatory CopG/NikR family. Ni(2+) is required as a cofactor.

Transcriptional regulator. In Pelobacter propionicus (strain DSM 2379 / NBRC 103807 / OttBd1), this protein is Putative nickel-responsive regulator.